A 218-amino-acid polypeptide reads, in one-letter code: Dynein axonemal assembly factor 6 (218 aa).

Positions 66–103 (MGPGNIGPPKAKESKAIPEPRSDESENIWNPEEVPEGA) are disordered. Over residues 75 to 89 (KAKESKAIPEPRSDE) the composition is skewed to basic and acidic residues.

It belongs to the PIH1 family. In terms of assembly, interacts with HSPA1A/B, HSP90AA1 and DNAI2. Interacts with DNAAF2 and DNAAF4. As to expression, specifically expressed in testis. Detected in pachytene spermatocytes from 5 weeks of age and in pachytene and diplotene spermatocytes of adult mice. Not detected in spermatids or mature sperm.

Its subcellular location is the cytoplasm. It localises to the golgi apparatus. The protein resides in the trans-Golgi network. In terms of biological role, plays a role in cytoplasmic pre-assembly of axonemal dynein. The sequence is that of Dynein axonemal assembly factor 6 from Mus musculus (Mouse).